The primary structure comprises 139 residues: Large ribosomal subunit protein bL17 (139 aa).

The segment at 117-139 is disordered; sequence DRDPEAKGQDSGPVEIKDESEEG.

The protein belongs to the bacterial ribosomal protein bL17 family. As to quaternary structure, part of the 50S ribosomal subunit. Contacts protein L32.

The chain is Large ribosomal subunit protein bL17 from Rhodospirillum centenum (strain ATCC 51521 / SW).